A 149-amino-acid chain; its full sequence is Ribonuclease VapC2 (149 aa).

Residues Ile11–Ile149 form the PINc domain. Residues Asp14 and Asp116 each contribute to the Mg(2+) site.

The protein belongs to the PINc/VapC protein family. The cofactor is Mg(2+).

Functionally, toxic component of a type II toxin-antitoxin (TA) system. An RNase. Its cognate antitoxin is VapB2. This chain is Ribonuclease VapC2, found in Methanocaldococcus jannaschii (strain ATCC 43067 / DSM 2661 / JAL-1 / JCM 10045 / NBRC 100440) (Methanococcus jannaschii).